The primary structure comprises 596 residues: Actin-histidine N-methyltransferase (596 aa).

Residues 1–22 form a disordered region; the sequence is MGKKSRVKTQKSGTGATATVSP. The segment covering 10–20 has biased composition (polar residues); that stretch reads QKSGTGATATV. Residues R75, 104–106, R254, 275–279, and 325–327 each bind S-adenosyl-L-methionine; these read EGF, DMCNH, and SGF. Residues 94–314 form the SET domain; that stretch reads EGFEMVNFKE…AGDQIYIFYG (221 aa). The tract at residues 551-596 is disordered; the sequence is GLVNGESLIPNGTRSENESLSPEESENTTGDTEESSGSMDAVKERL. A compositionally biased stretch (acidic residues) spans 571–584; sequence SPEESENTTGDTEE.

This sequence belongs to the class V-like SAM-binding methyltransferase superfamily. SETD3 actin-histidine methyltransferase family. As to quaternary structure, interacts with MYOD1. Phosphorylated by GSK3B, which is required for recognition by the SCF(FBXW7) complex and subsequent degradation. In terms of processing, ubiquitinated by the SCF(FBXW7) complex following phosphorylation by GSK3B, leading to its degradation by the proteasome.

Its subcellular location is the cytoplasm. It is found in the nucleus. It catalyses the reaction L-histidyl-[protein] + S-adenosyl-L-methionine = N(tele)-methyl-L-histidyl-[protein] + S-adenosyl-L-homocysteine + H(+). In terms of biological role, protein-histidine N-methyltransferase that specifically mediates 3-methylhistidine (tele-methylhistidine) methylation of actin at 'His-73'. Histidine methylation of actin is required for smooth muscle contraction of the laboring uterus during delivery. Does not have protein-lysine N-methyltransferase activity and probably only catalyzes histidine methylation of actin. The polypeptide is Actin-histidine N-methyltransferase (Rattus norvegicus (Rat)).